A 245-amino-acid polypeptide reads, in one-letter code: Cytochrome P450 CYP82H23 (245 aa).

Belongs to the cytochrome P450 family. The cofactor is heme.

Its function is as follows. Probable heme-thiolate monooxygenase. This Panax ginseng (Korean ginseng) protein is Cytochrome P450 CYP82H23.